Consider the following 95-residue polypeptide: CRISPR-associated endoribonuclease Cas2 3 (95 aa).

A Mg(2+)-binding site is contributed by Asp7.

This sequence belongs to the CRISPR-associated endoribonuclease Cas2 protein family. As to quaternary structure, homodimer, forms a heterotetramer with a Cas1 homodimer. Mg(2+) is required as a cofactor.

Its function is as follows. CRISPR (clustered regularly interspaced short palindromic repeat), is an adaptive immune system that provides protection against mobile genetic elements (viruses, transposable elements and conjugative plasmids). CRISPR clusters contain sequences complementary to antecedent mobile elements and target invading nucleic acids. CRISPR clusters are transcribed and processed into CRISPR RNA (crRNA). Functions as a ssRNA-specific endoribonuclease. Involved in the integration of spacer DNA into the CRISPR cassette. This is CRISPR-associated endoribonuclease Cas2 3 from Rhodospirillum rubrum (strain ATCC 11170 / ATH 1.1.1 / DSM 467 / LMG 4362 / NCIMB 8255 / S1).